The primary structure comprises 331 residues: UDP-GalNAc:beta-1,3-N-acetylgalactosaminyltransferase 1 (331 aa).

At 1–20 (MASALWTVLPSRMSLRSLQW) the chain is on the cytoplasmic side. The helical; Signal-anchor for type II membrane protein transmembrane segment at 21-43 (SLLLLSLLSFLVMWYLSLPHYNV) threads the bilayer. Residues 44 to 331 (IERVNWMYFY…VMLRNTTCHY (288 aa)) lie on the Lumenal side of the membrane. N72, N154, N198, N212, and N326 each carry an N-linked (GlcNAc...) asparagine glycan.

The protein belongs to the glycosyltransferase 31 family. It depends on Mg(2+) as a cofactor.

It is found in the golgi apparatus membrane. It catalyses the reaction a globoside Gb3Cer (d18:1(4E)) + UDP-N-acetyl-alpha-D-galactosamine = a globoside Gb4Cer (d18:1(4E)) + UDP + H(+). It participates in protein modification; protein glycosylation. Functionally, transfers N-acetylgalactosamine onto globotriaosylceramide. Plays a critical role in preimplantation stage embryonic development. This is UDP-GalNAc:beta-1,3-N-acetylgalactosaminyltransferase 1 (B3GALNT1) from Pongo abelii (Sumatran orangutan).